The following is a 238-amino-acid chain: Heme oxygenase 1 (238 aa).

Belongs to the heme oxygenase family.

The enzyme catalyses heme b + 3 reduced [NADPH--hemoprotein reductase] + 3 O2 = biliverdin IXalpha + CO + Fe(2+) + 3 oxidized [NADPH--hemoprotein reductase] + 3 H2O + H(+). In terms of biological role, catalyzes the opening of the heme ring with the release of iron. Key enzyme in the synthesis of the chromophoric part of the photosynthetic antennae. Upon overexpression in E.coli with PCB:ferredoxin oxidoreductase, CpeS and either CpcB or PecB permits synthesis of phycocyanin-coupled CpcB or PecB. This Nostoc sp. (strain PCC 7120 / SAG 25.82 / UTEX 2576) protein is Heme oxygenase 1 (pbsA1).